The sequence spans 1288 residues: Probable serine/threonine-protein kinase drkD (1288 aa).

A compositionally biased stretch (polar residues) spans 1–12; the sequence is MEGSFQFNKSKQ. Disordered stretches follow at residues 1-132, 156-223, and 269-386; these read MEGS…QYHP, FNVS…PEEI, and SFGH…DDEE. Low complexity-rich tracts occupy residues 13 to 79 and 156 to 220; these read TNNN…NSTS and FNVS…QQQP. A coiled-coil region spans residues 221 to 248; that stretch reads EEIEGELNRERQERDKMLHEEAEIEQYK. Polar residues predominate over residues 271 to 291; it reads GHITSANSDETTNNESGSPIN. A compositionally biased stretch (basic and acidic residues) spans 302–343; sequence PHSSHNEDHQSDQDNHGQFMNDEHQSTDDDQNKSDNEKESES. The segment covering 344–354 has biased composition (polar residues); it reads ARNSGDLQQKV. The span at 376 to 386 shows a compositional bias: acidic residues; the sequence is EGEEEDDDDEE. 7 LRR repeats span residues 400-421, 423-444, 446-468, 469-490, 492-513, 517-538, and 540-561; these read KSTKLSLSNCWLKVIPTDVWSI, ELRDLDLSANQLKKVSKSIGLL, HLKRLRLNHNQLTALPKELYSLP, RLTTLYLNNNNFKVVPKEINRL, SLKTLDLSFNQITDISPQTNLH, NLVELRLRYNQLSSLPQNMLES, and HLQVLWLEGNRLPLNKAILKKS. Disordered regions lie at residues 690–717, 733–764, and 796–825; these read WDQQQQQQQQQSPNVSTPPISTSPVLTG, PTQQINNPPSPVTQFNQASPQHNNNQQQQQQQ, and QQQQQQNGSPQQPHVNNNNNNNIQQNKDHQ. Composition is skewed to polar residues over residues 701 to 717 and 733 to 757; these read SPNVSTPPISTSPVLTG and PTQQINNPPSPVTQFNQASPQHNNN. The Protein kinase domain occupies 851–1104; it reads IAIGARIGRG…EILPIMEGMI (254 aa). Residues 857 to 865 and lysine 878 contribute to the ATP site; that span reads IGRGGYGQV. Aspartate 974 serves as the catalytic Proton acceptor. Disordered stretches follow at residues 1118-1141 and 1245-1288; these read GRPIPYVGPPEKDPSNKQPPQNMA and QQQL…NDKK. Over residues 1257–1268 the composition is skewed to low complexity; that stretch reads NRLNYNFNNSNN. Over residues 1269–1282 the composition is skewed to polar residues; the sequence is SDIQPMQQENNYRM.

The protein belongs to the protein kinase superfamily. TKL Ser/Thr protein kinase family.

The enzyme catalyses L-seryl-[protein] + ATP = O-phospho-L-seryl-[protein] + ADP + H(+). It catalyses the reaction L-threonyl-[protein] + ATP = O-phospho-L-threonyl-[protein] + ADP + H(+). The sequence is that of Probable serine/threonine-protein kinase drkD (drkD) from Dictyostelium discoideum (Social amoeba).